A 133-amino-acid chain; its full sequence is Ribonuclease P protein component (133 aa).

The protein belongs to the RnpA family. Consists of a catalytic RNA component (M1 or rnpB) and a protein subunit.

It carries out the reaction Endonucleolytic cleavage of RNA, removing 5'-extranucleotides from tRNA precursor.. Its function is as follows. RNaseP catalyzes the removal of the 5'-leader sequence from pre-tRNA to produce the mature 5'-terminus. It can also cleave other RNA substrates such as 4.5S RNA. The protein component plays an auxiliary but essential role in vivo by binding to the 5'-leader sequence and broadening the substrate specificity of the ribozyme. The chain is Ribonuclease P protein component from Bartonella quintana (strain Toulouse) (Rochalimaea quintana).